We begin with the raw amino-acid sequence, 87 residues long: Small ribosomal subunit protein bS20 (87 aa).

It belongs to the bacterial ribosomal protein bS20 family.

Functionally, binds directly to 16S ribosomal RNA. This Clostridium botulinum (strain Eklund 17B / Type B) protein is Small ribosomal subunit protein bS20.